The primary structure comprises 494 residues: MTPPESVTLEENAATAVDPKELIKDVLEAYPEKGRKKREKHLNVYQEGKPDCGVKSNIKSLPGSMTTRGCAYAGSKGVVWGPIKDMIHISHGPVGCGYYSWSGRRNYYIGTTGIDTFGTMQFTSDFQERDIVFGGDKKLAKLITELEELFPLNRGISIQSECPIGLIGDDIEAVAKKSAKEINKAVVPVRCEGFRGVSQSLGHHIANDAVRDWIFPRTDKAKKDGTIDVDPTQYDVAIIGDYNIGGDAWSSRILLEEIGLRVVAQWSGDGTINELINTPTVKLNLVHCYRSMNYISRHMEETYGIPWLEYNFFGPTQIAKSLREIAAKFDETIQAKAEEVIAKYQAQTDEVIAKFLPRLQGKTVALMVGGLRPRHVVPAFYDLGMRLIGTGYEFGHNDDYKRTTHYIEDGTLIYDDVSAFEFEEFIKEMKPDLVASGIKEKYVFQKMALPFRQMHSWDYSGPYHGYDGFAIFARDMDMALNSPTWSLIGAPWSK.

Cys-70, Cys-96, and Cys-162 together coordinate [8Fe-7S] cluster. The [7Fe-Mo-9S-C-homocitryl] cluster site is built by Cys-288 and His-455.

Belongs to the NifD/NifK/NifE/NifN family. Tetramer of two alpha and two beta chains. Forms complex with the iron protein (nitrogenase component 2). It depends on [8Fe-7S] cluster as a cofactor. [7Fe-Mo-9S-C-homocitryl] cluster serves as cofactor.

It carries out the reaction N2 + 8 reduced [2Fe-2S]-[ferredoxin] + 16 ATP + 16 H2O = H2 + 8 oxidized [2Fe-2S]-[ferredoxin] + 2 NH4(+) + 16 ADP + 16 phosphate + 6 H(+). Functionally, this molybdenum-iron protein is part of the nitrogenase complex that catalyzes the key enzymatic reactions in nitrogen fixation. This is Nitrogenase molybdenum-iron protein alpha chain (nifD) from Leptolyngbya boryana (Plectonema boryanum).